The primary structure comprises 448 residues: MNGSNLEHRIPALPHLGFGDVLLSHSLASTHYTVLAFLLAVCIPSAPRKSILRYGLLLLQITCALQAFVAPPPPTSDSAVLYTSGVLMANLLARYFDRLYTTVPEESFHRITSTKPESREDATKLPITQRLPWALELFSVTRGIGWNWRVSGIPKSTAPKSRSRFVTAQLLTIIAMYAGLYLVEVTCQGLLASYSSPGTTNANAVQTLAGNLVMYALIVLGLALVVYSHFALFVLPLSILCVGLQVGPVAWRDMSAWPPDYGSLWEAYSLRRFWGITWHQQLRRHTGAPAAYLFSFLPDAVRTSKRRSARLTRRYMLMLITFVISGLIHTSGSYHVSRGLGLPLSYGGEVKYFISQAISIMIEDFGCWLLRIDDRSAGEASTVRRWVGYIVTAGWYFWSRVHWSVMPVALASGIQDERGPLFIALEHTRRSAAAVPGNFAAKAWKITP.

N-linked (GlcNAc...) asparagine glycosylation is present at Asn-2. Helical transmembrane passes span 21-41, 54-74, 79-96, 165-185, 217-237, 316-336, 350-370, and 390-410; these read VLLSHSLASTHYTVLAFLLAV, YGLLLLQITCALQAFVAPPPP, AVLYTSGVLMANLLARYF, FVTAQLLTIIAMYAGLYLVEV, LIVLGLALVVYSHFALFVLPL, MLMLITFVISGLIHTSGSYHV, VKYFISQAISIMIEDFGCWLL, and IVTAGWYFWSRVHWSVMPVAL.

Belongs to the wax synthase family.

Its subcellular location is the membrane. It participates in secondary metabolite biosynthesis; terpenoid biosynthesis. In terms of biological role, O-Mevalon transferase yanI; part of the gene cluster that mediates the biosynthesis of yanuthone D, a fungal isoprenoid epoxycyclohexenone that acts as an antibiotic against fungi and bacteria. The first step of the pathway is the synthesis of 6-methylsalicylic acid (6-MSA) by the polyketide synthase yanA. 6-MSA is then converted to m-cresol by the decarboxylase yanB. The cytochrome P450 monooxygenase yanC then catalyzes the oxidation of m-cresol to toluquinol. Epoxidation of toluquinol is then performed by the short chain dehydrogenase yanD, with the help of yanE, and a further prenylation by yanG leads to 7-deacetoxyyanuthone A. The next step is the hydroxylation of C-22 of 7-deacetoxyyanuthone A by the cytochrome P450 monooxygenase yanH to yield 22-deacetylyanuthone A. O-Mevalon transferase yanI then attaches mevalon to the hydroxyl group of 22-deacetylyanuthone A to produce yanuthone E. Finally, the FAD-dependent monooxygenase yanF oxidizes the hydroxyl group at C15 of yanuthone E to form yanuthone D. Furthermore, several branching points in the pathway lead to the production of yanuthones F and G from 7-deacetoxyyanuthone A; yanuthones H and I from 22-deacetylyanuthone A; and yanuthone J from yanuthone E. This chain is O-Mevalon transferase yanI, found in Aspergillus niger (strain ATCC 1015 / CBS 113.46 / FGSC A1144 / LSHB Ac4 / NCTC 3858a / NRRL 328 / USDA 3528.7).